The following is an 82-amino-acid chain: DNA-directed RNA polymerase subunit omega (82 aa).

The protein belongs to the RNA polymerase subunit omega family. In terms of assembly, in cyanobacteria the RNAP catalytic core is composed of 2 alpha, 1 beta, 1 beta', 1 gamma and 1 omega subunit. When a sigma factor is associated with the core the holoenzyme is formed, which can initiate transcription.

It catalyses the reaction RNA(n) + a ribonucleoside 5'-triphosphate = RNA(n+1) + diphosphate. Functionally, promotes RNA polymerase assembly. Latches the N- and C-terminal regions of the beta' subunit thereby facilitating its interaction with the beta and alpha subunits. This is DNA-directed RNA polymerase subunit omega from Trichodesmium erythraeum (strain IMS101).